A 443-amino-acid polypeptide reads, in one-letter code: Probable glycine dehydrogenase (decarboxylating) subunit 1 (443 aa).

This sequence belongs to the GcvP family. N-terminal subunit subfamily. The glycine cleavage system is composed of four proteins: P, T, L and H. In this organism, the P 'protein' is a heterodimer of two subunits.

It carries out the reaction N(6)-[(R)-lipoyl]-L-lysyl-[glycine-cleavage complex H protein] + glycine + H(+) = N(6)-[(R)-S(8)-aminomethyldihydrolipoyl]-L-lysyl-[glycine-cleavage complex H protein] + CO2. In terms of biological role, the glycine cleavage system catalyzes the degradation of glycine. The P protein binds the alpha-amino group of glycine through its pyridoxal phosphate cofactor; CO(2) is released and the remaining methylamine moiety is then transferred to the lipoamide cofactor of the H protein. In Koribacter versatilis (strain Ellin345), this protein is Probable glycine dehydrogenase (decarboxylating) subunit 1.